The chain runs to 573 residues: Dihydroxy-acid dehydratase (573 aa).

Over residues 1–14 (MTEKSPKPHKRSDA) the composition is skewed to basic and acidic residues. Residues 1 to 21 (MTEKSPKPHKRSDAITEGPNR) are disordered. Cys-55 provides a ligand contact to [2Fe-2S] cluster. Mg(2+) is bound at residue Asp-87. [2Fe-2S] cluster is bound at residue Cys-128. Residues Asp-129 and Lys-130 each coordinate Mg(2+). Lys-130 bears the N6-carboxylysine mark. Cys-200 serves as a coordination point for [2Fe-2S] cluster. Mg(2+) is bound at residue Glu-450. The active-site Proton acceptor is Ser-476.

The protein belongs to the IlvD/Edd family. In terms of assembly, homodimer. [2Fe-2S] cluster serves as cofactor. Mg(2+) is required as a cofactor.

The catalysed reaction is (2R)-2,3-dihydroxy-3-methylbutanoate = 3-methyl-2-oxobutanoate + H2O. It carries out the reaction (2R,3R)-2,3-dihydroxy-3-methylpentanoate = (S)-3-methyl-2-oxopentanoate + H2O. It functions in the pathway amino-acid biosynthesis; L-isoleucine biosynthesis; L-isoleucine from 2-oxobutanoate: step 3/4. The protein operates within amino-acid biosynthesis; L-valine biosynthesis; L-valine from pyruvate: step 3/4. Functions in the biosynthesis of branched-chain amino acids. Catalyzes the dehydration of (2R,3R)-2,3-dihydroxy-3-methylpentanoate (2,3-dihydroxy-3-methylvalerate) into 2-oxo-3-methylpentanoate (2-oxo-3-methylvalerate) and of (2R)-2,3-dihydroxy-3-methylbutanoate (2,3-dihydroxyisovalerate) into 2-oxo-3-methylbutanoate (2-oxoisovalerate), the penultimate precursor to L-isoleucine and L-valine, respectively. The sequence is that of Dihydroxy-acid dehydratase from Koribacter versatilis (strain Ellin345).